A 218-amino-acid polypeptide reads, in one-letter code: 7-cyano-7-deazaguanine synthase (218 aa).

Residue 10-20 (FSGGQDSTTCL) participates in ATP binding. Zn(2+) contacts are provided by cysteine 186, cysteine 195, cysteine 198, and cysteine 201.

This sequence belongs to the QueC family. As to quaternary structure, homodimer. The cofactor is Zn(2+).

The enzyme catalyses 7-carboxy-7-deazaguanine + NH4(+) + ATP = 7-cyano-7-deazaguanine + ADP + phosphate + H2O + H(+). Its pathway is purine metabolism; 7-cyano-7-deazaguanine biosynthesis. In terms of biological role, catalyzes the ATP-dependent conversion of 7-carboxy-7-deazaguanine (CDG) to 7-cyano-7-deazaguanine (preQ(0)). This is 7-cyano-7-deazaguanine synthase from Exiguobacterium sibiricum (strain DSM 17290 / CCUG 55495 / CIP 109462 / JCM 13490 / 255-15).